The chain runs to 240 residues: Zein-alpha 19C2 (240 aa).

Positions 1–21 (MATKIFSLLMLLALSTCVANA) are cleaved as a signal peptide.

Belongs to the zein family. In terms of assembly, interacts with OP10 (via N-terminus).

Its function is as follows. Zeins are major seed storage proteins. In Zea mays (Maize), this protein is Zein-alpha 19C2.